Here is a 1141-residue protein sequence, read N- to C-terminus: DNA-directed RNA polymerase subunit beta (1141 aa).

It belongs to the RNA polymerase beta chain family. In terms of assembly, the RNAP catalytic core consists of 2 alpha, 1 beta, 1 beta' and 1 omega subunit. When a sigma factor is associated with the core the holoenzyme is formed, which can initiate transcription.

It catalyses the reaction RNA(n) + a ribonucleoside 5'-triphosphate = RNA(n+1) + diphosphate. Its function is as follows. DNA-dependent RNA polymerase catalyzes the transcription of DNA into RNA using the four ribonucleoside triphosphates as substrates. This is DNA-directed RNA polymerase subunit beta from Frankia alni (strain DSM 45986 / CECT 9034 / ACN14a).